A 287-amino-acid chain; its full sequence is F-actin-capping protein subunit beta (287 aa).

S2 bears the N-acetylserine mark. 2 positions are modified to phosphoserine: S85 and S92.

Belongs to the F-actin-capping protein beta subunit family. As to quaternary structure, component of the F-actin capping complex, composed of a heterodimer of an alpha and a beta subunit. Interacts with BSP1 (via C-terminus); leading to recruitment of the F-actin capping complex to actin cortical patches and the acomyosin contractile ring.

It is found in the cytoplasm. The protein localises to the cytoskeleton. It localises to the actin patch. Its subcellular location is the bud. The protein resides in the bud tip. Functionally, F-actin-capping proteins bind in a Ca(2+)-independent manner to the fast growing ends of actin filaments (barbed end) thereby blocking the exchange of subunits at these ends. Unlike other capping proteins (such as gelsolin and severin), these proteins do not sever actin filaments. This Saccharomyces cerevisiae (strain ATCC 204508 / S288c) (Baker's yeast) protein is F-actin-capping protein subunit beta (CAP2).